The chain runs to 163 residues: Troponin C (163 aa).

Serine 1 bears the N-acetylserine mark. EF-hand domains follow at residues 14-49, 50-85, 90-125, and 127-162; these read EQIS…LGMS, ISRE…AMQD, IPDD…CAGD, and LTDD…LKVR. Position 20 is an N6,N6-dimethyllysine; alternate (lysine 20). Lysine 20 is subject to N6-methyllysine; alternate. Ca(2+)-binding residues include aspartate 27, aspartate 29, aspartate 33, glutamate 38, aspartate 63, aspartate 65, serine 67, threonine 69, glutamate 74, aspartate 103, asparagine 105, aspartate 107, and glutamate 114.

This sequence belongs to the troponin C family.

Troponin is the central regulatory protein of striated muscle contraction. Tn consists of three components: Tn-I which is the inhibitor of actomyosin ATPase, Tn-T which contains the binding site for tropomyosin and Tn-C. The binding of calcium to Tn-C abolishes the inhibitory action of Tn on actin filaments. The polypeptide is Troponin C (Branchiostoma lanceolatum (Common lancelet)).